A 138-amino-acid polypeptide reads, in one-letter code: Large ribosomal subunit protein uL16 (138 aa).

Over residues 1-13 (MLQPSRRKYRKEQ) the composition is skewed to basic residues. The tract at residues 1-24 (MLQPSRRKYRKEQKGRNTGLASRG) is disordered.

This sequence belongs to the universal ribosomal protein uL16 family. In terms of assembly, part of the 50S ribosomal subunit.

Binds 23S rRNA and is also seen to make contacts with the A and possibly P site tRNAs. This chain is Large ribosomal subunit protein uL16, found in Bordetella bronchiseptica (strain ATCC BAA-588 / NCTC 13252 / RB50) (Alcaligenes bronchisepticus).